Consider the following 1178-residue polypeptide: Mediator of RNA polymerase II transcription subunit 14 (1178 aa).

The segment covering 1–12 (MDNSVHNNSNTT) has biased composition (polar residues). Disordered regions lie at residues 1–50 (MDNS…PITV) and 1064–1178 (LAGT…VVLD). 2 stretches are compositionally biased toward low complexity: residues 1074-1112 (PTQI…QGAA) and 1119-1164 (HQLQ…AQQR).

The protein belongs to the Mediator complex subunit 14 family. Component of the Mediator complex.

It localises to the nucleus. Functionally, component of the Mediator complex, a coactivator involved in the regulated transcription of nearly all RNA polymerase II-dependent genes. Mediator functions as a bridge to convey information from gene-specific regulatory proteins to the basal RNA polymerase II transcription machinery. Mediator is recruited to promoters by direct interactions with regulatory proteins and serves as a scaffold for the assembly of a functional preinitiation complex with RNA polymerase II and the general transcription factors. In Chaetomium globosum (strain ATCC 6205 / CBS 148.51 / DSM 1962 / NBRC 6347 / NRRL 1970) (Soil fungus), this protein is Mediator of RNA polymerase II transcription subunit 14 (RGR1).